Consider the following 239-residue polypeptide: Mannose-P-dolichol utilization defect 1 protein homolog 1 (239 aa).

6 helical membrane-spanning segments follow: residues 25–45, 62–82, 91–111, 123–143, 174–194, and 202–222; these read CLLP…SMTV, LSVV…AYCL, FGEL…IYYF, AILY…PFLF, LSFL…FTSI, and MLLG…QILL. The region spanning 27–93 is the PQ-loop 1 domain; it reads LPLISKLLGY…KDLPFSAFGE (67 aa). Residues 150–205 enclose the PQ-loop 2 domain; it reads KHLIFLSARIPQIWKNFRNKSTGQLSFLTCLMNFGGALARVFTSIQEKAPLSMLLG.

The protein belongs to the MPDU1 (TC 2.A.43.3) family.

It is found in the membrane. This chain is Mannose-P-dolichol utilization defect 1 protein homolog 1, found in Arabidopsis thaliana (Mouse-ear cress).